The chain runs to 294 residues: 4-hydroxy-tetrahydrodipicolinate synthase (294 aa).

A pyruvate-binding site is contributed by threonine 47. Tyrosine 135 serves as the catalytic Proton donor/acceptor. The active-site Schiff-base intermediate with substrate is lysine 163. Pyruvate is bound at residue threonine 205.

The protein belongs to the DapA family. As to quaternary structure, homotetramer; dimer of dimers.

It is found in the cytoplasm. It carries out the reaction L-aspartate 4-semialdehyde + pyruvate = (2S,4S)-4-hydroxy-2,3,4,5-tetrahydrodipicolinate + H2O + H(+). The protein operates within amino-acid biosynthesis; L-lysine biosynthesis via DAP pathway; (S)-tetrahydrodipicolinate from L-aspartate: step 3/4. Functionally, catalyzes the condensation of (S)-aspartate-beta-semialdehyde [(S)-ASA] and pyruvate to 4-hydroxy-tetrahydrodipicolinate (HTPA). This is 4-hydroxy-tetrahydrodipicolinate synthase from Rickettsia felis (strain ATCC VR-1525 / URRWXCal2) (Rickettsia azadi).